The chain runs to 328 residues: MLKLVFAGTPDVAVPSLKAFAADPRFDVVGVITRPDAPTGRGRKLTPSPVKATALELGLPVIDLKPRSPEFMEALNNLHADIAAVIAYGNILPKNVLDAVPMGWYNLHFSNLPKWRGAAPAQRAIWAGDPTTGADVFKVGEGLDDGPIVASLTIELTGRETSGELLDRLAEEGAPMYVDALAAVGEGTATFTAQPAEGLEYAHKITVEDARISWTDEAEAIDRQVRACTPHPGAWTELFAEGPIADNDEPAAKPLTLHILAAQPADQSNPNTPAELQPGELKVGKKNVWVGTGSTPLELTQVKAQGKKAMRAADWARGARLSPAACVR.

110 to 113 serves as a coordination point for (6S)-5,6,7,8-tetrahydrofolate; that stretch reads SNLP.

Belongs to the Fmt family.

The enzyme catalyses L-methionyl-tRNA(fMet) + (6R)-10-formyltetrahydrofolate = N-formyl-L-methionyl-tRNA(fMet) + (6S)-5,6,7,8-tetrahydrofolate + H(+). In terms of biological role, attaches a formyl group to the free amino group of methionyl-tRNA(fMet). The formyl group appears to play a dual role in the initiator identity of N-formylmethionyl-tRNA by promoting its recognition by IF2 and preventing the misappropriation of this tRNA by the elongation apparatus. This is Methionyl-tRNA formyltransferase from Bifidobacterium longum (strain DJO10A).